The following is a 378-amino-acid chain: Protein FAM170B (378 aa).

Disordered regions lie at residues 1-56, 244-265, and 277-378; these read MKHH…LPDD, TRDQ…DSSE, and QQQP…QQGK. Composition is skewed to low complexity over residues 277-339 and 349-378; these read QQQP…QPLQ and PQKQ…QQGK.

The protein belongs to the FAM170 family. In terms of assembly, interacts with GOPC. As to expression, exclusively expressed in adult testis (at protein level). Expression first started at postnatal week 3 in round spermatids, elongated spermatids and mature sperm.

Its subcellular location is the cytoplasmic vesicle. The protein localises to the secretory vesicle. The protein resides in the acrosome. It localises to the acrosome outer membrane. In terms of biological role, plays a role in fertilization through the acrosome reaction. This Mus musculus (Mouse) protein is Protein FAM170B.